A 109-amino-acid chain; its full sequence is Parvalbumin-7 (109 aa).

A2 carries the post-translational modification N-acetylalanine. 2 EF-hand domains span residues 39 to 74 (LSADNVKLVFKALDVDASGFIEEEELKFVLKGFSAD) and 78 to 109 (LTDKETKAFLAAADKDGDGKIGIDEFEALVHE). Residues D52, D54, S56, F58, E60, E63, D91, D93, D95, K97, and E102 each contribute to the Ca(2+) site.

This sequence belongs to the parvalbumin family.

In terms of biological role, in muscle, parvalbumin is thought to be involved in relaxation after contraction. It binds two calcium ions. This chain is Parvalbumin-7 (pvalb7), found in Danio rerio (Zebrafish).